Reading from the N-terminus, the 218-residue chain is Probable GTP-binding protein EngB (218 aa).

The EngB-type G domain occupies 23-200 (EVPEIAFVGR…AQLLWQWAHP (178 aa)). Residues 31-38 (GRSNAGKS), 58-62 (GRTQH), 80-83 (DLPG), 150-153 (TKAD), and 179-181 (FSA) contribute to the GTP site. 2 residues coordinate Mg(2+): Ser38 and Thr60.

It belongs to the TRAFAC class TrmE-Era-EngA-EngB-Septin-like GTPase superfamily. EngB GTPase family. Requires Mg(2+) as cofactor.

Functionally, necessary for normal cell division and for the maintenance of normal septation. The sequence is that of Probable GTP-binding protein EngB from Acidovorax ebreus (strain TPSY) (Diaphorobacter sp. (strain TPSY)).